The sequence spans 280 residues: Lacto-N-neotetraose biosynthesis glycosyltransferase LgtE (280 aa).

The protein belongs to the glycosyltransferase 25 family.

Its pathway is glycan metabolism; lacto-N-neotetraose biosynthesis. It functions in the pathway bacterial outer membrane biogenesis; lipooligosaccharide biosynthesis. Adds the first galactose to the lacto-N-tetraose chain in lipooligosaccharide (LOS). The chain is Lacto-N-neotetraose biosynthesis glycosyltransferase LgtE (lgtE) from Neisseria gonorrhoeae.